The chain runs to 414 residues: Gamma-glutamyl phosphate reductase (414 aa).

Belongs to the gamma-glutamyl phosphate reductase family.

The protein resides in the cytoplasm. It carries out the reaction L-glutamate 5-semialdehyde + phosphate + NADP(+) = L-glutamyl 5-phosphate + NADPH + H(+). It participates in amino-acid biosynthesis; L-proline biosynthesis; L-glutamate 5-semialdehyde from L-glutamate: step 2/2. In terms of biological role, catalyzes the NADPH-dependent reduction of L-glutamate 5-phosphate into L-glutamate 5-semialdehyde and phosphate. The product spontaneously undergoes cyclization to form 1-pyrroline-5-carboxylate. This Limosilactobacillus reuteri (strain DSM 20016) (Lactobacillus reuteri) protein is Gamma-glutamyl phosphate reductase.